A 213-amino-acid chain; its full sequence is AN1-type zinc finger protein 5 (213 aa).

An A20-type zinc finger spans residues 8–42; that stretch reads TPGPMLCSTGCGFYGNPRTNGMCSVCYKEHLQRQQ. Residues Cys14, Cys18, Cys30, and Cys33 each coordinate Zn(2+). A disordered region spans residues 39-149; it reads QRQQNSGRMS…EEKAPELPKP (111 aa). Residues 40–66 show a composition bias toward polar residues; it reads RQQNSGRMSPMGTASGSNSPTSDSASV. 2 positions are modified to phosphoserine: Ser48 and Ser58. The segment covering 120–138 has biased composition (low complexity); it reads SEPVVTQPSPSVSQPSSSQ. A compositionally biased stretch (basic and acidic residues) spans 139-148; the sequence is SEEKAPELPK. An AN1-type zinc finger spans residues 148 to 194; the sequence is KPKKNRCFMCRKKVGLTGFDCRCGNLFCGLHRYSDKHNCPYDYKAEA. The Zn(2+) site is built by Cys154, Cys157, Cys168, Cys170, Cys175, His178, His184, and Cys186. Lys209 carries the N6-acetyllysine modification.

As to quaternary structure, homooligomer and/or heterooligomer. Interacts (via A20-type domain) with IKBKG and RIPK1 and with TRAF6 (via AN1-type domain). Interacts with ubiquitin and polyubiquitinated proteins. Identified in a heterotrimeric complex with ubiquitin and SQSTM1, where ZFAND5 and SQSTM1 both interact with the same ubiquitin molecule.

Its subcellular location is the cytoplasm. In terms of biological role, involved in protein degradation via the ubiquitin-proteasome system. May act by anchoring ubiquitinated proteins to the proteasome. Plays a role in ubiquitin-mediated protein degradation during muscle atrophy. Plays a role in the regulation of NF-kappa-B activation and apoptosis. Inhibits NF-kappa-B activation triggered by overexpression of RIPK1 and TRAF6 but not of RELA. Also inhibits tumor necrosis factor (TNF), IL-1 and TLR4-induced NF-kappa-B activation in a dose-dependent manner. Overexpression sensitizes cells to TNF-induced apoptosis. Is a potent inhibitory factor for osteoclast differentiation. The polypeptide is AN1-type zinc finger protein 5 (Zfand5) (Rattus norvegicus (Rat)).